A 177-amino-acid polypeptide reads, in one-letter code: Large ribosomal subunit protein uL6 (177 aa).

Belongs to the universal ribosomal protein uL6 family. As to quaternary structure, part of the 50S ribosomal subunit.

Functionally, this protein binds to the 23S rRNA, and is important in its secondary structure. It is located near the subunit interface in the base of the L7/L12 stalk, and near the tRNA binding site of the peptidyltransferase center. In Photobacterium profundum (strain SS9), this protein is Large ribosomal subunit protein uL6.